Consider the following 284-residue polypeptide: NADH-cytochrome b5 reductase 1 (284 aa).

The helical transmembrane segment at 8 to 28 (PLVIFSTLAAIILAAVAVYVV) threads the bilayer. The region spanning 41 to 144 (DVFQKFPLIE…RGPKGFFTYT (104 aa)) is the FAD-binding FR-type domain. FAD-binding positions include 124–139 (DSKS…GPKG) and 150–182 (HLGM…KISL).

This sequence belongs to the flavoprotein pyridine nucleotide cytochrome reductase family. In terms of assembly, monomer. Component of the 2-(3-amino-3-carboxypropyl)histidine synthase complex composed of DPH1, DPH2, DPH3 and a NADH-dependent reductase, predominantly CBR1. It depends on FAD as a cofactor.

It is found in the mitochondrion outer membrane. It catalyses the reaction 2 Fe(III)-[cytochrome b5] + NADH = 2 Fe(II)-[cytochrome b5] + NAD(+) + H(+). It carries out the reaction 2 Fe(3+)-[Dph3] + NADH = 2 Fe(2+)-[Dph3] + NAD(+) + H(+). Its pathway is protein modification; peptidyl-diphthamide biosynthesis. Its function is as follows. NADH-dependent reductase for DPH3 and cytochrome b5. Required for the first step of diphthamide biosynthesis, a post-translational modification of histidine which occurs in elongation factor 2. DPH1 and DPH2 transfer a 3-amino-3-carboxypropyl (ACP) group from S-adenosyl-L-methionine (SAM) to a histidine residue, the reaction is assisted by a reduction system comprising DPH3 and a NADH-dependent reductase, predominantly CBR1. By reducing DPH3, also involved in the formation of the tRNA wobble base modification mcm5s 2U (5-methoxycarbonylmethyl-2-thiouridine), mediated by the elongator complex. The cytochrome b5/NADH cytochrome b5 reductase electron transfer system supports the catalytic activity of several sterol biosynthetic enzymes. The chain is NADH-cytochrome b5 reductase 1 (CBR1) from Meyerozyma guilliermondii (strain ATCC 6260 / CBS 566 / DSM 6381 / JCM 1539 / NBRC 10279 / NRRL Y-324) (Yeast).